The chain runs to 198 residues: Prostamide/prostaglandin F synthase (198 aa).

Y108 carries the phosphotyrosine modification.

It belongs to the peroxiredoxin-like PRXL2 family. Prostamide/prostaglandin F synthase subfamily.

The protein resides in the cytoplasm. Its subcellular location is the cytosol. It catalyses the reaction prostaglandin H2 + [thioredoxin]-dithiol = prostaglandin F2alpha + [thioredoxin]-disulfide. It carries out the reaction prostamide F2alpha + [thioredoxin]-disulfide = prostamide H2 + [thioredoxin]-dithiol. Catalyzes the reduction of prostaglandin-ethanolamide H(2) (prostamide H(2)) to prostamide F(2alpha) with NADPH as proton donor. Also able to reduce prostaglandin H(2) to prostaglandin F(2alpha). The sequence is that of Prostamide/prostaglandin F synthase from Homo sapiens (Human).